Consider the following 143-residue polypeptide: MVKISDNSEIYDLIKDVTYLLGISIIEINTFRKRDEFKIQIVLYKSDNFSVDMLCDLHKMILLKLEAVLKYNVSLEISTPGINRKIKSDREFKIFEGKKIKLMLNNDFEEGFILRAERDGFIFKTEYKKVKILYSNVKKAKLS.

It belongs to the RimP family.

The protein localises to the cytoplasm. Its function is as follows. Required for maturation of 30S ribosomal subunits. The chain is Ribosome maturation factor RimP from Borrelia recurrentis (strain A1).